Consider the following 419-residue polypeptide: DNA ligase (419 aa).

The NTD stretch occupies residues 1-120 (MLNQFPGQLS…ARQKRGAHTN (120 aa)). The interval 121-317 (RGMIPPMLVK…NYHSPHLAKL (197 aa)) is AD domain. K151 (N6-AMP-lysine intermediate) is an active-site residue. Residues 318–419 (KPLLDAEFIL…REPINVLEII (102 aa)) are OB domain.

Belongs to the ATP-dependent DNA ligase family.

It localises to the virion. It carries out the reaction ATP + (deoxyribonucleotide)n-3'-hydroxyl + 5'-phospho-(deoxyribonucleotide)m = (deoxyribonucleotide)n+m + AMP + diphosphate.. Its function is as follows. Very low-fidelity DNA ligase that seals nicks in double-stranded DNA during DNA repair. Together with the viral repair DNA polymerase X, fills the single nucleotide gaps generated by the AP endonuclease. It is not essential for viral replication and recombination. Displays a very low adenylation activity towards DNA with 3'-dideoxy- or 3'-amino-terminated nicks compared to regular nick DNA. This Ornithodoros (relapsing fever ticks) protein is DNA ligase.